Consider the following 367-residue polypeptide: DNA replication and repair protein RecF (367 aa).

ATP is bound at residue 30-37 (GNNAQGKT).

It belongs to the RecF family.

The protein resides in the cytoplasm. Its function is as follows. The RecF protein is involved in DNA metabolism; it is required for DNA replication and normal SOS inducibility. RecF binds preferentially to single-stranded, linear DNA. It also seems to bind ATP. This Clostridium tetani (strain Massachusetts / E88) protein is DNA replication and repair protein RecF.